Here is a 210-residue protein sequence, read N- to C-terminus: Holliday junction branch migration complex subunit RuvA (210 aa).

The segment at 1 to 64 (MIGLIEGRVC…EDAQLLYGFL (64 aa)) is domain I. Residues 65–143 (HPTERDVFRQ…HIQSDMSLLT (79 aa)) form a domain II region. The tract at residues 144–154 (EVEQQIGIAAN) is flexible linker. Residues 155–210 (SEGVILAEVESALISLGYRDKEAQQAIKAARETDAGQQLVDTQSLLKLTLKQLSNF) are domain III.

It belongs to the RuvA family. Homotetramer. Forms an RuvA(8)-RuvB(12)-Holliday junction (HJ) complex. HJ DNA is sandwiched between 2 RuvA tetramers; dsDNA enters through RuvA and exits via RuvB. An RuvB hexamer assembles on each DNA strand where it exits the tetramer. Each RuvB hexamer is contacted by two RuvA subunits (via domain III) on 2 adjacent RuvB subunits; this complex drives branch migration. In the full resolvosome a probable DNA-RuvA(4)-RuvB(12)-RuvC(2) complex forms which resolves the HJ.

It localises to the cytoplasm. In terms of biological role, the RuvA-RuvB-RuvC complex processes Holliday junction (HJ) DNA during genetic recombination and DNA repair, while the RuvA-RuvB complex plays an important role in the rescue of blocked DNA replication forks via replication fork reversal (RFR). RuvA specifically binds to HJ cruciform DNA, conferring on it an open structure. The RuvB hexamer acts as an ATP-dependent pump, pulling dsDNA into and through the RuvAB complex. HJ branch migration allows RuvC to scan DNA until it finds its consensus sequence, where it cleaves and resolves the cruciform DNA. This Psychrobacter sp. (strain PRwf-1) protein is Holliday junction branch migration complex subunit RuvA.